Consider the following 1400-residue polypeptide: Alpha-(1-&gt;3)-arabinofuranosyltransferase (1400 aa).

Positions 1-30 (MAPLSRKWLPVVGAVALALTFAQSPGQVSP) are cleaved as a signal peptide. A run of 8 helical transmembrane segments spans residues 67 to 87 (YLFPHGTFFVIGHLLGVPGWV), 91 to 111 (LWWAVLLTVGFWGLLRVAEAL), 139 to 159 (ISSETLPMMLAPWVLLPTILA), 179 to 199 (VALMGAVNAIATLAGCLPAVI), 215 to 235 (AWWLLAMALATLWWVMALTQL), 282 to 302 (LVTGSAAILGTCLVAAAGLAG), 314 to 334 (LVTMLLVGVVLLAVGHRGGLA), and 401 to 421 (VAVAVVALTALMVSTSLAWTG). One can recognise an F5/8 type C domain in the interval 700–883 (AEPVVGGWTG…WDLGSELLGR (184 aa)). Transmembrane regions (helical) follow at residues 1256–1276 (LYRASLAIGLALLPLLALLAF), 1297–1317 (WAAAGVLAAGAVIASIAGVMV), 1338–1358 (VTVGLAAGGLILAGAALSRHP), and 1369–1389 (WASVQLLALISVSVVAASVVA).

It is found in the membrane. The catalysed reaction is Adds an alpha-D-arabinofuranosyl group from trans,octacis-decaprenylphospho-beta-D-arabinofuranose at the 3-O-position of an alpha-(1-&gt;5)-arabinofuranan chain attached to a beta-(1-&gt;5)-galactofuranan chain.. The protein operates within cell wall biogenesis; cell wall polysaccharide biosynthesis. Its function is as follows. Involved in the biosynthesis of the arabinogalactan (AG) region of the mycolylarabinogalactan-peptidoglycan (mAGP) complex, an essential component of the mycobacterial cell wall. Catalyzes the addition of an arabinofuranosyl (Araf) residue from the sugar donor decaprenyl-phospho-arabinose (DPA) on the C-3 of an alpha-(1-&gt;5)-linked Araf from the arabinan backbone of AG. The polypeptide is Alpha-(1-&gt;3)-arabinofuranosyltransferase (aftD) (Mycobacterium tuberculosis (strain ATCC 25618 / H37Rv)).